The primary structure comprises 185 residues: Elongation factor P (185 aa).

Belongs to the elongation factor P family.

It localises to the cytoplasm. It participates in protein biosynthesis; polypeptide chain elongation. Involved in peptide bond synthesis. Stimulates efficient translation and peptide-bond synthesis on native or reconstituted 70S ribosomes in vitro. Probably functions indirectly by altering the affinity of the ribosome for aminoacyl-tRNA, thus increasing their reactivity as acceptors for peptidyl transferase. The chain is Elongation factor P from Staphylococcus carnosus (strain TM300).